The sequence spans 346 residues: Methylthioribose-1-phosphate isomerase (346 aa).

Residues arginine 50–alanine 52, arginine 93, and glutamine 196 contribute to the substrate site. The active-site Proton donor is the aspartate 237. Asparagine 247–lysine 248 contacts substrate.

It belongs to the eIF-2B alpha/beta/delta subunits family. MtnA subfamily.

The catalysed reaction is 5-(methylsulfanyl)-alpha-D-ribose 1-phosphate = 5-(methylsulfanyl)-D-ribulose 1-phosphate. It participates in amino-acid biosynthesis; L-methionine biosynthesis via salvage pathway; L-methionine from S-methyl-5-thio-alpha-D-ribose 1-phosphate: step 1/6. Catalyzes the interconversion of methylthioribose-1-phosphate (MTR-1-P) into methylthioribulose-1-phosphate (MTRu-1-P). The polypeptide is Methylthioribose-1-phosphate isomerase (Alkalilimnicola ehrlichii (strain ATCC BAA-1101 / DSM 17681 / MLHE-1)).